The sequence spans 137 residues: Ribosomal RNA large subunit methyltransferase H (137 aa).

Residues Leu-56, Gly-85, and 104–109 (LSPLTL) each bind S-adenosyl-L-methionine.

This sequence belongs to the RNA methyltransferase RlmH family. Homodimer.

It is found in the cytoplasm. The enzyme catalyses pseudouridine(1915) in 23S rRNA + S-adenosyl-L-methionine = N(3)-methylpseudouridine(1915) in 23S rRNA + S-adenosyl-L-homocysteine + H(+). Functionally, specifically methylates the pseudouridine at position 1915 (m3Psi1915) in 23S rRNA. The sequence is that of Ribosomal RNA large subunit methyltransferase H from Thermus thermophilus (strain ATCC 27634 / DSM 579 / HB8).